The primary structure comprises 216 residues: UPF0502 protein VPA1223 (216 aa).

The protein belongs to the UPF0502 family.

In Vibrio parahaemolyticus serotype O3:K6 (strain RIMD 2210633), this protein is UPF0502 protein VPA1223.